We begin with the raw amino-acid sequence, 345 residues long: Arginine-hydroxylase NDUFAF5, mitochondrial (345 aa).

The N-terminal 36 residues, 1–36 (MLRPAGLWRLCRRPWAARVPAENLGRREVTSGVSPR), are a transit peptide targeting the mitochondrion.

The protein belongs to the methyltransferase superfamily. As to quaternary structure, interacts with NDUFAF8, leading to stabilize NDUFAF5. Interacts with NDUFS7. Interacts with PYURF (via TRM112 domain); the interaction is direct and stabilizes NDUFAF5 protein.

The protein resides in the mitochondrion inner membrane. Arginine hydroxylase that mediates hydroxylation of 'Arg-111' of NDUFS7 and is involved in the assembly of mitochondrial NADH:ubiquinone oxidoreductase complex (complex I, MT-ND1) at early stages. May also have methyltransferase activity. The protein is Arginine-hydroxylase NDUFAF5, mitochondrial of Homo sapiens (Human).